A 220-amino-acid polypeptide reads, in one-letter code: RPA-interacting protein B (220 aa).

Residues 1 to 45 are interaction with importin beta; it reads MEAERRHRALYKGTTPPWKETYRKRCVERLKSNRSKLLDKFRQVG. An interaction with RPA1 region spans residues 49 to 165; that stretch reads HGGVGGSFLV…QCGVYINTQS (117 aa). The RIP-type zinc-finger motif lies at 138-213; it reads CPVCNRNYLT…ASLFMSCQEC (76 aa).

In terms of assembly, interacts directly with the RPA1 subunit of RPA complex. Interacts with importin beta, but not with importin alpha. Forms a complex with the RPA complex and importin beta, which is dissociated by Ran-GTP.

It localises to the nucleus. Functionally, mediates the import of RPA complex into the nucleus, via its interaction with importin beta. The chain is RPA-interacting protein B (rpain-b) from Xenopus laevis (African clawed frog).